A 239-amino-acid polypeptide reads, in one-letter code: 7-cyano-7-deazaguanine synthase (239 aa).

Residue 12–22 coordinates ATP; that stretch reads FSGGQDSATCL. Zn(2+) contacts are provided by C200, C215, C218, and C221.

The protein belongs to the QueC family. The cofactor is Zn(2+).

The enzyme catalyses 7-carboxy-7-deazaguanine + NH4(+) + ATP = 7-cyano-7-deazaguanine + ADP + phosphate + H2O + H(+). It participates in purine metabolism; 7-cyano-7-deazaguanine biosynthesis. Catalyzes the ATP-dependent conversion of 7-carboxy-7-deazaguanine (CDG) to 7-cyano-7-deazaguanine (preQ(0)). The protein is 7-cyano-7-deazaguanine synthase of Hyphomonas neptunium (strain ATCC 15444).